The chain runs to 520 residues: UDP-N-acetylmuramoyl-L-alanyl-D-glutamate--2,6-diaminopimelate ligase (520 aa).

Leu-48 is a UDP-N-acetyl-alpha-D-muramoyl-L-alanyl-D-glutamate binding site. 134 to 140 (GTSGKTT) contacts ATP. Residues 176-177 (TT), Ser-203, and Arg-211 contribute to the UDP-N-acetyl-alpha-D-muramoyl-L-alanyl-D-glutamate site. An N6-carboxylysine modification is found at Lys-243. Residues Arg-405, 429–432 (DNPR), Gly-483, and Glu-487 each bind meso-2,6-diaminopimelate. The Meso-diaminopimelate recognition motif motif lies at 429-432 (DNPR).

This sequence belongs to the MurCDEF family. MurE subfamily. Requires Mg(2+) as cofactor. Post-translationally, carboxylation is probably crucial for Mg(2+) binding and, consequently, for the gamma-phosphate positioning of ATP.

Its subcellular location is the cytoplasm. It carries out the reaction UDP-N-acetyl-alpha-D-muramoyl-L-alanyl-D-glutamate + meso-2,6-diaminopimelate + ATP = UDP-N-acetyl-alpha-D-muramoyl-L-alanyl-gamma-D-glutamyl-meso-2,6-diaminopimelate + ADP + phosphate + H(+). It functions in the pathway cell wall biogenesis; peptidoglycan biosynthesis. Catalyzes the addition of meso-diaminopimelic acid to the nucleotide precursor UDP-N-acetylmuramoyl-L-alanyl-D-glutamate (UMAG) in the biosynthesis of bacterial cell-wall peptidoglycan. The chain is UDP-N-acetylmuramoyl-L-alanyl-D-glutamate--2,6-diaminopimelate ligase from Mycolicibacterium paratuberculosis (strain ATCC BAA-968 / K-10) (Mycobacterium paratuberculosis).